We begin with the raw amino-acid sequence, 347 residues long: MNPLAQPIIYSTIFAGTLITASSSHWFLTWVGLEMNMLAFIPVLTKKMNPRSTEAAIKYFLVQATASMILMMAILSNNLLSGQWTMANITNQYSSTMMLMALAMKLGMAPFHFWVPEVTQGTTLMSGLLLLTWQKLAPISIMYQIFPVVNVNILLAFSILSIMVGSWGGLNQTQLRKILAYSSITHVGWMMAVLPYNPDITIFNLIIYIVLTTTAFLALNLNSSTTTLLLSRSWNKLTWLLPLIPSTLLSLGGLPPLTGFLPKWLVIEELTKNGTLIIPTAMAIITLINLYFYMRLIYSTSITLLPTSNNVKMKWQFENTKPTFLLPTLMTLTTLLLPIAPLTFPTP.

The next 11 helical transmembrane spans lie at 1-21 (MNPL…LITA), 25-45 (HWFL…PVLT), 55-75 (AAIK…MAIL), 96-116 (TMML…FWVP), 123-143 (TLMS…SIMY), 145-165 (IFPV…IMVG), 178-198 (ILAY…PYNP), 200-220 (ITIF…LALN), 237-257 (LTWL…LPPL), 274-294 (GTLI…YFYM), and 324-344 (FLLP…PLTF).

Belongs to the complex I subunit 2 family. As to quaternary structure, core subunit of respiratory chain NADH dehydrogenase (Complex I) which is composed of 45 different subunits. Interacts with TMEM242.

The protein localises to the mitochondrion inner membrane. The catalysed reaction is a ubiquinone + NADH + 5 H(+)(in) = a ubiquinol + NAD(+) + 4 H(+)(out). In terms of biological role, core subunit of the mitochondrial membrane respiratory chain NADH dehydrogenase (Complex I) which catalyzes electron transfer from NADH through the respiratory chain, using ubiquinone as an electron acceptor. Essential for the catalytic activity and assembly of complex I. This Hylobates lar (Lar gibbon) protein is NADH-ubiquinone oxidoreductase chain 2.